A 227-amino-acid chain; its full sequence is Cytochrome c oxidase subunit 2 (227 aa).

At 1–14 (MAYPFQLGLQDATS) the chain is on the mitochondrial intermembrane side. Residues 15 to 45 (PIMEELTNFHDHTLMIVFLISSLVLYIISLM) form a helical membrane-spanning segment. At 46 to 59 (LTTKLTHTSTMDAQ) the chain is on the mitochondrial matrix side. Residues 60–87 (EVETIWTILPAAILVLIALPSLRILYMM) traverse the membrane as a helical segment. Over 88–227 (DEINNPVLTV…YFESWSASMI (140 aa)) the chain is Mitochondrial intermembrane. His-161, Cys-196, Glu-198, Cys-200, His-204, and Met-207 together coordinate Cu cation. Glu-198 contributes to the Mg(2+) binding site. Tyr-218 bears the Phosphotyrosine mark.

It belongs to the cytochrome c oxidase subunit 2 family. As to quaternary structure, component of the cytochrome c oxidase (complex IV, CIV), a multisubunit enzyme composed of 14 subunits. The complex is composed of a catalytic core of 3 subunits MT-CO1, MT-CO2 and MT-CO3, encoded in the mitochondrial DNA, and 11 supernumerary subunits COX4I, COX5A, COX5B, COX6A, COX6B, COX6C, COX7A, COX7B, COX7C, COX8 and NDUFA4, which are encoded in the nuclear genome. The complex exists as a monomer or a dimer and forms supercomplexes (SCs) in the inner mitochondrial membrane with NADH-ubiquinone oxidoreductase (complex I, CI) and ubiquinol-cytochrome c oxidoreductase (cytochrome b-c1 complex, complex III, CIII), resulting in different assemblies (supercomplex SCI(1)III(2)IV(1) and megacomplex MCI(2)III(2)IV(2)). Found in a complex with TMEM177, COA6, COX18, COX20, SCO1 and SCO2. Interacts with TMEM177 in a COX20-dependent manner. Interacts with COX20. Interacts with COX16. The cofactor is Cu cation.

It localises to the mitochondrion inner membrane. It carries out the reaction 4 Fe(II)-[cytochrome c] + O2 + 8 H(+)(in) = 4 Fe(III)-[cytochrome c] + 2 H2O + 4 H(+)(out). Functionally, component of the cytochrome c oxidase, the last enzyme in the mitochondrial electron transport chain which drives oxidative phosphorylation. The respiratory chain contains 3 multisubunit complexes succinate dehydrogenase (complex II, CII), ubiquinol-cytochrome c oxidoreductase (cytochrome b-c1 complex, complex III, CIII) and cytochrome c oxidase (complex IV, CIV), that cooperate to transfer electrons derived from NADH and succinate to molecular oxygen, creating an electrochemical gradient over the inner membrane that drives transmembrane transport and the ATP synthase. Cytochrome c oxidase is the component of the respiratory chain that catalyzes the reduction of oxygen to water. Electrons originating from reduced cytochrome c in the intermembrane space (IMS) are transferred via the dinuclear copper A center (CU(A)) of subunit 2 and heme A of subunit 1 to the active site in subunit 1, a binuclear center (BNC) formed by heme A3 and copper B (CU(B)). The BNC reduces molecular oxygen to 2 water molecules using 4 electrons from cytochrome c in the IMS and 4 protons from the mitochondrial matrix. The chain is Cytochrome c oxidase subunit 2 (MT-CO2) from Conilurus penicillatus (Brush-tailed rabbit-rat).